Reading from the N-terminus, the 304-residue chain is tRNA pseudouridine synthase B (304 aa).

Asp47 functions as the Nucleophile in the catalytic mechanism. The disordered stretch occupies residues 85–105 (TNTDDGEGEVTETSDARPSDD).

This sequence belongs to the pseudouridine synthase TruB family. Type 1 subfamily.

The catalysed reaction is uridine(55) in tRNA = pseudouridine(55) in tRNA. Responsible for synthesis of pseudouridine from uracil-55 in the psi GC loop of transfer RNAs. This is tRNA pseudouridine synthase B from Dinoroseobacter shibae (strain DSM 16493 / NCIMB 14021 / DFL 12).